A 207-amino-acid polypeptide reads, in one-letter code: MKFFSIASLGLLLVVATAFPASELQREDGENSVTRNKPTRASSGKTRRQISYLIKEVFEMRKELCKNDETCIKSHVAVSENNLNLPKMTEKDGCFQTGYNRDDCLVRITSGLLEFQVYLRYIRNKFQEGNNRDRAEHVQSSSKALIEILKQEVKDPNKIVFPSPTANINLLAKLESQNDWQKVMTMQLILSNFEDFLQFTLRAVRKA.

Residues methionine 1–alanine 18 form the signal peptide. A disordered region spans residues arginine 26–arginine 47. The span at asparagine 31–glycine 44 shows a compositional bias: polar residues. An intrachain disulfide couples cysteine 65 to cysteine 71. Serine 74 carries the post-translational modification Phosphoserine. Cysteine 94 and cysteine 104 form a disulfide bridge.

The protein belongs to the IL-6 superfamily. Component of a hexamer of two molecules each of IL6, IL6R and IL6ST; first binds to IL6R to associate with the signaling subunit IL6ST. Interacts with IL6R (via the N-terminal ectodomain); this interaction may be affected by IL6R-binding with SORL1, hence decreasing IL6 cis signaling. Interacts with SORL1 (via the N-terminal ectodomain); this interaction leads to IL6 internalization and lysosomal degradation. May form a trimeric complex with the soluble SORL1 ectodomain and soluble IL6R receptor; this interaction might stabilize circulating IL6, hence promoting IL6 trans signaling.

The protein localises to the secreted. Cytokine with a wide variety of biological functions in immunity, tissue regeneration, and metabolism. Binds to IL6R, then the complex associates to the signaling subunit IL6ST/gp130 to trigger the intracellular IL6-signaling pathway. The interaction with the membrane-bound IL6R and IL6ST stimulates 'classic signaling', whereas the binding of IL6 and soluble IL6R to IL6ST stimulates 'trans-signaling'. Alternatively, 'cluster signaling' occurs when membrane-bound IL6:IL6R complexes on transmitter cells activate IL6ST receptors on neighboring receiver cells. Its function is as follows. IL6 is a potent inducer of the acute phase response. Rapid production of IL6 contributes to host defense during infection and tissue injury, but excessive IL6 synthesis is involved in disease pathology. In the innate immune response, is synthesized by myeloid cells, such as macrophages and dendritic cells, upon recognition of pathogens through toll-like receptors (TLRs) at the site of infection or tissue injury. In the adaptive immune response, is required for the differentiation of B cells into immunoglobulin-secreting cells. Plays a major role in the differentiation of CD4(+) T cell subsets. Essential factor for the development of T follicular helper (Tfh) cells that are required for the induction of germinal-center formation. Required to drive naive CD4(+) T cells to the Th17 lineage. Also required for proliferation of myeloma cells and the survival of plasmablast cells. In terms of biological role, acts as an essential factor in bone homeostasis and on vessels directly or indirectly by induction of VEGF, resulting in increased angiogenesis activity and vascular permeability. Induces, through 'trans-signaling' and synergistically with IL1B and TNF, the production of VEGF. Involved in metabolic controls, is discharged into the bloodstream after muscle contraction increasing lipolysis and improving insulin resistance. 'Trans-signaling' in central nervous system also regulates energy and glucose homeostasis. Mediates, through GLP-1, crosstalk between insulin-sensitive tissues, intestinal L cells and pancreatic islets to adapt to changes in insulin demand. Also acts as a myokine. Plays a protective role during liver injury, being required for maintenance of tissue regeneration. Also has a pivotal role in iron metabolism by regulating HAMP/hepcidin expression upon inflammation or bacterial infection. Through activation of IL6ST-YAP-NOTCH pathway, induces inflammation-induced epithelial regeneration. This is Interleukin-6 (IL6) from Marmota monax (Woodchuck).